The chain runs to 342 residues: Dof zinc finger protein DOF4.6 (342 aa).

The tract at residues 21–54 (NTCPKPQPQPLQPQQPPSVGGERKARPEKDQAVN) is disordered. Pro residues predominate over residues 25–36 (KPQPQPLQPQQP). Residues 41-51 (GERKARPEKDQ) are compositionally biased toward basic and acidic residues. Residues 53 to 107 (VNCPRCNSTNTKFCYYNNYSLTQPRYFCKGCRRYWTEGGSLRNIPVGGGSRKNKR) form a Dof-type zinc finger. Zn(2+) contacts are provided by Cys55, Cys58, Cys80, and Cys83. Positions 94–136 (RNIPVGGGSRKNKRSHSSSSDISNNHSDSTQPATKKHLSDHHH) are disordered. The span at 110–122 (SSSSDISNNHSDS) shows a compositional bias: low complexity. A compositionally biased stretch (basic residues) spans 127-136 (TKKHLSDHHH).

Accumulates in the stele.

The protein resides in the nucleus. Functionally, transcription factor that binds specifically to a 5'-AA[AG]G-3' consensus core sequence. The sequence is that of Dof zinc finger protein DOF4.6 from Arabidopsis thaliana (Mouse-ear cress).